Reading from the N-terminus, the 284-residue chain is MVLMIVSGRSGSGKSVALRALEDMGFYCVDNLPVVLLPDLARTLADRQISAAVSIDVRNMPESPEIFEQAMNNLPDAFSPQLLFLDADRNTLIRRYSDTRRLHPLSSKNLSLESAIDKESDLLEPLRSRADLIVDTSEMSVHELAEMLRTRLLGKRERELTMVFESFGFKHGIPIDADYVFDVRFLPNPHWDPKLRPMTGLDKPVAAFLDRHTEVHNFIYQTRSYLELWLPMLETNNRSYLTVAIGCTGGKHRSVYIAEQLADYFRSRGKNVQSRHRTLEKRKT.

8–15 (GRSGSGKS) is a binding site for ATP. GTP is bound at residue 56-59 (DVRN). Positions 266–284 (RSRGKNVQSRHRTLEKRKT) are RNA-binding.

The protein belongs to the RapZ-like family. RapZ subfamily. Homotrimer.

Functionally, modulates the synthesis of GlmS, by affecting the processing and stability of the regulatory small RNA GlmZ. When glucosamine-6-phosphate (GlcN6P) concentrations are high in the cell, RapZ binds GlmZ and targets it to cleavage by RNase E. Consequently, GlmZ is inactivated and unable to activate GlmS synthesis. Under low GlcN6P concentrations, RapZ is sequestered and inactivated by an other regulatory small RNA, GlmY, preventing GlmZ degradation and leading to synthesis of GlmS. The chain is RNase adapter protein RapZ from Salmonella arizonae (strain ATCC BAA-731 / CDC346-86 / RSK2980).